Consider the following 78-residue polypeptide: Small ribosomal subunit protein bS18 (78 aa).

Belongs to the bacterial ribosomal protein bS18 family. Part of the 30S ribosomal subunit. Forms a tight heterodimer with protein bS6.

Binds as a heterodimer with protein bS6 to the central domain of the 16S rRNA, where it helps stabilize the platform of the 30S subunit. The polypeptide is Small ribosomal subunit protein bS18 (Kocuria rhizophila (strain ATCC 9341 / DSM 348 / NBRC 103217 / DC2201)).